We begin with the raw amino-acid sequence, 117 residues long: Large ribosomal subunit protein uL22 (117 aa).

This sequence belongs to the universal ribosomal protein uL22 family. In terms of assembly, part of the 50S ribosomal subunit.

Its function is as follows. This protein binds specifically to 23S rRNA; its binding is stimulated by other ribosomal proteins, e.g. L4, L17, and L20. It is important during the early stages of 50S assembly. It makes multiple contacts with different domains of the 23S rRNA in the assembled 50S subunit and ribosome. Functionally, the globular domain of the protein is located near the polypeptide exit tunnel on the outside of the subunit, while an extended beta-hairpin is found that lines the wall of the exit tunnel in the center of the 70S ribosome. The sequence is that of Large ribosomal subunit protein uL22 from Leptospira biflexa serovar Patoc (strain Patoc 1 / ATCC 23582 / Paris).